The following is a 385-amino-acid chain: 1-deoxy-D-xylulose 5-phosphate reductoisomerase (385 aa).

NADPH-binding residues include threonine 10, glycine 11, isoleucine 13, glycine 36, and asparagine 38. Lysine 123 serves as a coordination point for 1-deoxy-D-xylulose 5-phosphate. Residue glutamate 124 coordinates NADPH. Aspartate 148 is a binding site for Mn(2+). Serine 149, glutamate 150, serine 172, and histidine 195 together coordinate 1-deoxy-D-xylulose 5-phosphate. Mn(2+) is bound at residue glutamate 150. Glycine 201 contributes to the NADPH binding site. Residues serine 208, asparagine 213, lysine 214, and glutamate 217 each contribute to the 1-deoxy-D-xylulose 5-phosphate site. Glutamate 217 is a binding site for Mn(2+).

Belongs to the DXR family. The cofactor is Mg(2+). It depends on Mn(2+) as a cofactor.

The enzyme catalyses 2-C-methyl-D-erythritol 4-phosphate + NADP(+) = 1-deoxy-D-xylulose 5-phosphate + NADPH + H(+). It participates in isoprenoid biosynthesis; isopentenyl diphosphate biosynthesis via DXP pathway; isopentenyl diphosphate from 1-deoxy-D-xylulose 5-phosphate: step 1/6. Its function is as follows. Catalyzes the NADPH-dependent rearrangement and reduction of 1-deoxy-D-xylulose-5-phosphate (DXP) to 2-C-methyl-D-erythritol 4-phosphate (MEP). The protein is 1-deoxy-D-xylulose 5-phosphate reductoisomerase of Anaplasma phagocytophilum (strain HZ).